Here is an 845-residue protein sequence, read N- to C-terminus: Protein translocase subunit SecA (845 aa).

Residues glutamine 88, 106 to 110, and aspartate 495 each bind ATP; that span reads GEGKT. Positions 804–838 are disordered; the sequence is SNRANRPQKKAKRQPIVKPDKPGRNDPCPCGSGKK. The span at 809 to 818 shows a compositional bias: basic residues; sequence RPQKKAKRQP. Zn(2+)-binding residues include cysteine 831, cysteine 833, cysteine 842, and cysteine 843.

It belongs to the SecA family. Monomer and homodimer. Part of the essential Sec protein translocation apparatus which comprises SecA, SecYEG and auxiliary proteins SecDF. Other proteins may also be involved. Zn(2+) is required as a cofactor.

The protein resides in the cell inner membrane. Its subcellular location is the cytoplasm. The enzyme catalyses ATP + H2O + cellular proteinSide 1 = ADP + phosphate + cellular proteinSide 2.. Functionally, part of the Sec protein translocase complex. Interacts with the SecYEG preprotein conducting channel. Has a central role in coupling the hydrolysis of ATP to the transfer of proteins into and across the cell membrane, serving as an ATP-driven molecular motor driving the stepwise translocation of polypeptide chains across the membrane. The polypeptide is Protein translocase subunit SecA (Halothermothrix orenii (strain H 168 / OCM 544 / DSM 9562)).